The chain runs to 151 residues: Small ribosomal subunit protein uS15 (151 aa).

It belongs to the universal ribosomal protein uS15 family.

The sequence is that of Small ribosomal subunit protein uS15 (RPS13) from Lumbricus rubellus (Humus earthworm).